The sequence spans 187 residues: Peptidyl-tRNA hydrolase (187 aa).

Tyrosine 15 lines the tRNA pocket. Histidine 20 (proton acceptor) is an active-site residue. The tRNA site is built by phenylalanine 65, asparagine 67, and asparagine 113.

Belongs to the PTH family. As to quaternary structure, monomer.

Its subcellular location is the cytoplasm. The enzyme catalyses an N-acyl-L-alpha-aminoacyl-tRNA + H2O = an N-acyl-L-amino acid + a tRNA + H(+). Hydrolyzes ribosome-free peptidyl-tRNAs (with 1 or more amino acids incorporated), which drop off the ribosome during protein synthesis, or as a result of ribosome stalling. Functionally, catalyzes the release of premature peptidyl moieties from peptidyl-tRNA molecules trapped in stalled 50S ribosomal subunits, and thus maintains levels of free tRNAs and 50S ribosomes. The chain is Peptidyl-tRNA hydrolase from Elusimicrobium minutum (strain Pei191).